Reading from the N-terminus, the 968-residue chain is RNA polymerase-associated protein RapA (968 aa).

In terms of domain architecture, Helicase ATP-binding spans 164–334 (DVGRRHAPRV…FARLRLLDPN (171 aa)). 177–184 (DEVGLGKT) is an ATP binding site. The DEAH box signature appears at 280 to 283 (DEAH). The Helicase C-terminal domain maps to 490-662 (RVEWLMGYLT…YLASPDQTEG (173 aa)).

Belongs to the SNF2/RAD54 helicase family. RapA subfamily. In terms of assembly, interacts with the RNAP. Has a higher affinity for the core RNAP than for the holoenzyme. Its ATPase activity is stimulated by binding to RNAP.

Functionally, transcription regulator that activates transcription by stimulating RNA polymerase (RNAP) recycling in case of stress conditions such as supercoiled DNA or high salt concentrations. Probably acts by releasing the RNAP, when it is trapped or immobilized on tightly supercoiled DNA. Does not activate transcription on linear DNA. Probably not involved in DNA repair. This chain is RNA polymerase-associated protein RapA, found in Escherichia coli O9:H4 (strain HS).